The following is a 262-amino-acid chain: MSPSLSGRTPRPKKRLGQHFLKDANTARIVAAGLTERDVVLEIGPGRGFLTAFLAERAGLVHAVEIDPDVLPELRRAVGARGNVRIHEADALRFDYGALSPPPNRLAANLPYNIASPLVLRLLEEVPSLERMRFMVQLEVALRMTARPGSKDYGAYAVLIQLLSRPEVAHRVSPRVFDPPPRVRSAVVELERRRDAPEDYRGVKELVAAAFRSRRKRLPNNLPGPLRERAEEALAGLGHGPDARAEELSPEDFVALYRRISP.

S-adenosyl-L-methionine-binding residues include H19, L21, G44, E65, D90, and N109. The interval 218–246 (LPNNLPGPLRERAEEALAGLGHGPDARAE) is disordered.

This sequence belongs to the class I-like SAM-binding methyltransferase superfamily. rRNA adenine N(6)-methyltransferase family. RsmA subfamily.

Its subcellular location is the cytoplasm. It carries out the reaction adenosine(1518)/adenosine(1519) in 16S rRNA + 4 S-adenosyl-L-methionine = N(6)-dimethyladenosine(1518)/N(6)-dimethyladenosine(1519) in 16S rRNA + 4 S-adenosyl-L-homocysteine + 4 H(+). Specifically dimethylates two adjacent adenosines (A1518 and A1519) in the loop of a conserved hairpin near the 3'-end of 16S rRNA in the 30S particle. May play a critical role in biogenesis of 30S subunits. The sequence is that of Ribosomal RNA small subunit methyltransferase A from Rubrobacter xylanophilus (strain DSM 9941 / JCM 11954 / NBRC 16129 / PRD-1).